Consider the following 271-residue polypeptide: 3-methyl-2-oxobutanoate hydroxymethyltransferase (271 aa).

Residues Asp-50 and Asp-89 each contribute to the Mg(2+) site. 3-methyl-2-oxobutanoate contacts are provided by residues 50 to 51 (DS), Asp-89, and Lys-118. Glu-120 contributes to the Mg(2+) binding site. The Proton acceptor role is filled by Glu-187.

Belongs to the PanB family. As to quaternary structure, homodecamer; pentamer of dimers. Mg(2+) serves as cofactor.

It is found in the cytoplasm. It catalyses the reaction 3-methyl-2-oxobutanoate + (6R)-5,10-methylene-5,6,7,8-tetrahydrofolate + H2O = 2-dehydropantoate + (6S)-5,6,7,8-tetrahydrofolate. It participates in cofactor biosynthesis; (R)-pantothenate biosynthesis; (R)-pantoate from 3-methyl-2-oxobutanoate: step 1/2. Its function is as follows. Catalyzes the reversible reaction in which hydroxymethyl group from 5,10-methylenetetrahydrofolate is transferred onto alpha-ketoisovalerate to form ketopantoate. The polypeptide is 3-methyl-2-oxobutanoate hydroxymethyltransferase (Campylobacter concisus (strain 13826)).